The primary structure comprises 470 residues: Neuraminidase (470 aa).

Over 1–6 (MNPNQK) the chain is Intravirion. A helical membrane pass occupies residues 7–27 (IITIGSICMAIGIISLILQIG). The segment at 11-33 (GSICMAIGIISLILQIGNIISIW) is involved in apical transport and lipid raft association. Residues 28–470 (NIISIWVSHS…GAELPFTIDK (443 aa)) are Virion surface-facing. The segment at 36–90 (HSIQTGSQNHTGICNQRIITYENSTWVNQTYVNISNTNVVAGKDTTSMTLAGNSS) is hypervariable stalk region. N-linked (GlcNAc...) asparagine; by host glycans are attached at residues asparagine 44, asparagine 58, asparagine 63, asparagine 68, and asparagine 88. Residues 91-470 (LCPIRGWAIY…GAELPFTIDK (380 aa)) are head of neuraminidase. Cystine bridges form between cysteine 92–cysteine 417, cysteine 124–cysteine 129, cysteine 184–cysteine 231, cysteine 233–cysteine 238, cysteine 279–cysteine 292, cysteine 281–cysteine 290, cysteine 318–cysteine 335, and cysteine 421–cysteine 447. Arginine 118 lines the substrate pocket. Residue asparagine 146 is glycosylated (N-linked (GlcNAc...) asparagine; by host). Catalysis depends on aspartate 151, which acts as the Proton donor/acceptor. Substrate is bound at residue arginine 152. N-linked (GlcNAc...) asparagine; by host glycosylation is present at asparagine 235. 277–278 (EE) provides a ligand contact to substrate. Arginine 293 lines the substrate pocket. Aspartate 294, glycine 298, and aspartate 324 together coordinate Ca(2+). Residue asparagine 365 is glycosylated (N-linked (GlcNAc...) asparagine; by host). Arginine 368 provides a ligand contact to substrate. Tyrosine 402 acts as the Nucleophile in catalysis. Residue asparagine 455 is glycosylated (N-linked (GlcNAc...) asparagine; by host).

It belongs to the glycosyl hydrolase 34 family. In terms of assembly, homotetramer. The cofactor is Ca(2+). Post-translationally, N-glycosylated.

The protein localises to the virion membrane. The protein resides in the host apical cell membrane. The catalysed reaction is Hydrolysis of alpha-(2-&gt;3)-, alpha-(2-&gt;6)-, alpha-(2-&gt;8)- glycosidic linkages of terminal sialic acid residues in oligosaccharides, glycoproteins, glycolipids, colominic acid and synthetic substrates.. With respect to regulation, inhibited by the neuraminidase inhibitors zanamivir (Relenza) and oseltamivir (Tamiflu). These drugs interfere with the release of progeny virus from infected cells and are effective against all influenza strains. Resistance to neuraminidase inhibitors is quite rare. Its function is as follows. Catalyzes the removal of terminal sialic acid residues from viral and cellular glycoconjugates. Cleaves off the terminal sialic acids on the glycosylated HA during virus budding to facilitate virus release. Additionally helps virus spread through the circulation by further removing sialic acids from the cell surface. These cleavages prevent self-aggregation and ensure the efficient spread of the progeny virus from cell to cell. Otherwise, infection would be limited to one round of replication. Described as a receptor-destroying enzyme because it cleaves a terminal sialic acid from the cellular receptors. May facilitate viral invasion of the upper airways by cleaving the sialic acid moieties on the mucin of the airway epithelial cells. Likely to plays a role in the budding process through its association with lipid rafts during intracellular transport. May additionally display a raft-association independent effect on budding. Plays a role in the determination of host range restriction on replication and virulence. Sialidase activity in late endosome/lysosome traffic seems to enhance virus replication. The chain is Neuraminidase from Aves (Human).